Consider the following 242-residue polypeptide: Biosynthetic peptidoglycan transglycosylase (242 aa).

A helical membrane pass occupies residues 19 to 39 (LMVVLAVFWGGGIALFSVAPV).

This sequence belongs to the glycosyltransferase 51 family.

It is found in the cell inner membrane. It catalyses the reaction [GlcNAc-(1-&gt;4)-Mur2Ac(oyl-L-Ala-gamma-D-Glu-L-Lys-D-Ala-D-Ala)](n)-di-trans,octa-cis-undecaprenyl diphosphate + beta-D-GlcNAc-(1-&gt;4)-Mur2Ac(oyl-L-Ala-gamma-D-Glu-L-Lys-D-Ala-D-Ala)-di-trans,octa-cis-undecaprenyl diphosphate = [GlcNAc-(1-&gt;4)-Mur2Ac(oyl-L-Ala-gamma-D-Glu-L-Lys-D-Ala-D-Ala)](n+1)-di-trans,octa-cis-undecaprenyl diphosphate + di-trans,octa-cis-undecaprenyl diphosphate + H(+). It participates in cell wall biogenesis; peptidoglycan biosynthesis. Peptidoglycan polymerase that catalyzes glycan chain elongation from lipid-linked precursors. This Escherichia coli (strain SMS-3-5 / SECEC) protein is Biosynthetic peptidoglycan transglycosylase.